Reading from the N-terminus, the 982-residue chain is Presequence protease, mitochondrial (982 aa).

The transit peptide at 1 to 7 (MFQIRNY) directs the protein to the mitochondrion. Residue His84 coordinates Zn(2+). Glu87 functions as the Proton acceptor in the catalytic mechanism. A Zn(2+)-binding site is contributed by His88. Glu160 is a catalytic residue. Glu185 provides a ligand contact to Zn(2+).

The protein belongs to the peptidase M16 family. PreP subfamily. As to quaternary structure, monomer and homodimer; homodimerization is induced by binding of the substrate. The cofactor is Zn(2+).

It localises to the mitochondrion intermembrane space. The protein resides in the mitochondrion matrix. Degrades mitochondrial transit peptides after their cleavage in the intermembrane space or in the matrix, and presequence peptides; clearance of these peptides is required to keep the presequence processing machinery running. Preferentially cleaves the N-terminal side of paired basic amino acid residues. Also degrades other unstructured peptides. May function as an ATP-dependent peptidase as opposed to a metalloendopeptidase. In Kluyveromyces lactis (strain ATCC 8585 / CBS 2359 / DSM 70799 / NBRC 1267 / NRRL Y-1140 / WM37) (Yeast), this protein is Presequence protease, mitochondrial (CYM1).